A 552-amino-acid chain; its full sequence is Urocanate hydratase (552 aa).

NAD(+) contacts are provided by residues 48 to 49, Gln-126, 172 to 174, Glu-192, Arg-197, 238 to 239, 259 to 263, 269 to 270, and Tyr-318; these read GG, GMG, NA, QTSAH, and YV. Cys-406 is a catalytic residue. NAD(+) is bound at residue Gly-488.

This sequence belongs to the urocanase family. The cofactor is NAD(+).

It is found in the cytoplasm. The enzyme catalyses 4-imidazolone-5-propanoate = trans-urocanate + H2O. It participates in amino-acid degradation; L-histidine degradation into L-glutamate; N-formimidoyl-L-glutamate from L-histidine: step 2/3. In terms of biological role, catalyzes the conversion of urocanate to 4-imidazolone-5-propionate. The polypeptide is Urocanate hydratase (Herpetosiphon aurantiacus (strain ATCC 23779 / DSM 785 / 114-95)).